A 427-amino-acid polypeptide reads, in one-letter code: F-box protein At2g16450 (427 aa).

An F-box domain is found at 1-45; sequence MNPSPITIDLILEILSRLPAKSVRRFHCVSKRWASIFGSPYFKEL.

In Arabidopsis thaliana (Mouse-ear cress), this protein is F-box protein At2g16450.